A 338-amino-acid polypeptide reads, in one-letter code: RNA 3'-terminal phosphate cyclase (338 aa).

ATP is bound by residues glutamine 103 and 283–287 (YLADQ). Catalysis depends on histidine 308, which acts as the Tele-AMP-histidine intermediate.

It belongs to the RNA 3'-terminal cyclase family. Type 1 subfamily.

The protein resides in the cytoplasm. The enzyme catalyses a 3'-end 3'-phospho-ribonucleotide-RNA + ATP = a 3'-end 2',3'-cyclophospho-ribonucleotide-RNA + AMP + diphosphate. Catalyzes the conversion of 3'-phosphate to a 2',3'-cyclic phosphodiester at the end of RNA. The mechanism of action of the enzyme occurs in 3 steps: (A) adenylation of the enzyme by ATP; (B) transfer of adenylate to an RNA-N3'P to produce RNA-N3'PP5'A; (C) and attack of the adjacent 2'-hydroxyl on the 3'-phosphorus in the diester linkage to produce the cyclic end product. The biological role of this enzyme is unknown but it is likely to function in some aspects of cellular RNA processing. The sequence is that of RNA 3'-terminal phosphate cyclase from Shigella boydii serotype 18 (strain CDC 3083-94 / BS512).